The sequence spans 500 residues: AMP phosphorylase (500 aa).

Residues Gly-166, 192 to 197 (SRAVTS), and Thr-201 contribute to the AMP site. Asp-254 acts as the Proton donor in catalysis. Ser-262 and Lys-286 together coordinate AMP.

The protein belongs to the thymidine/pyrimidine-nucleoside phosphorylase family. Type 2 subfamily.

The catalysed reaction is AMP + phosphate = alpha-D-ribose 1,5-bisphosphate + adenine. It carries out the reaction CMP + phosphate = cytosine + alpha-D-ribose 1,5-bisphosphate. The enzyme catalyses UMP + phosphate = alpha-D-ribose 1,5-bisphosphate + uracil. In terms of biological role, catalyzes the conversion of AMP and phosphate to adenine and ribose 1,5-bisphosphate (R15P). Exhibits phosphorylase activity toward CMP and UMP in addition to AMP. Functions in an archaeal AMP degradation pathway, together with R15P isomerase and RubisCO. In Natronomonas pharaonis (strain ATCC 35678 / DSM 2160 / CIP 103997 / JCM 8858 / NBRC 14720 / NCIMB 2260 / Gabara) (Halobacterium pharaonis), this protein is AMP phosphorylase (deoA).